Here is a 246-residue protein sequence, read N- to C-terminus: Ribonuclease 3 (246 aa).

The RNase III domain maps to 10–135 (LENFLTLNNI…FVAAIYLDLG (126 aa)). E50 serves as a coordination point for Mg(2+). Residue D54 is part of the active site. The Mg(2+) site is built by D121 and E124. Residue E124 is part of the active site. The DRBM domain maps to 161–230 (DPKSSFQEYI…ATRALETLKA (70 aa)).

This sequence belongs to the ribonuclease III family. As to quaternary structure, homodimer. The cofactor is Mg(2+).

Its subcellular location is the cytoplasm. It carries out the reaction Endonucleolytic cleavage to 5'-phosphomonoester.. Its function is as follows. Digests double-stranded RNA. Involved in the processing of primary rRNA transcript to yield the immediate precursors to the large and small rRNAs (23S and 16S). Processes some mRNAs, and tRNAs when they are encoded in the rRNA operon. Processes pre-crRNA and tracrRNA of type II CRISPR loci if present in the organism. The chain is Ribonuclease 3 from Mycoplasma mobile (strain ATCC 43663 / 163K / NCTC 11711) (Mesomycoplasma mobile).